The primary structure comprises 173 residues: Thiol-disulfide oxidoreductase ResA (173 aa).

Residues 10-29 traverse the membrane as a helical; Signal-anchor for type II membrane protein segment; the sequence is VIILLILSGAVGFTLYQGFF. The 139-residue stretch at 35–173 folds into the Thioredoxin domain; sequence MQIGKEAPNF…LEGYLKKITP (139 aa). Cysteine 73 and cysteine 76 form a disulfide bridge.

It belongs to the thioredoxin family. ResA subfamily.

It localises to the cell membrane. Its pathway is protein modification; cytochrome c assembly. In terms of biological role, thiol-disulfide oxidoreductase which is required in disulfide reduction during c-type cytochrome synthesis. May accept reducing equivalents from CcdA, leading to breakage of disulfide bonds in apocytochrome c; following this reduction heme can be covalently attached. This chain is Thiol-disulfide oxidoreductase ResA, found in Bacillus thuringiensis (strain Al Hakam).